Reading from the N-terminus, the 640-residue chain is 1,4-alpha-glucan branching enzyme GlgB (640 aa).

Aspartate 317 serves as the catalytic Nucleophile. The active-site Proton donor is glutamate 370.

The protein belongs to the glycosyl hydrolase 13 family. GlgB subfamily. In terms of assembly, monomer.

The enzyme catalyses Transfers a segment of a (1-&gt;4)-alpha-D-glucan chain to a primary hydroxy group in a similar glucan chain.. Its pathway is glycan biosynthesis; glycogen biosynthesis. Its function is as follows. Catalyzes the formation of the alpha-1,6-glucosidic linkages in glycogen by scission of a 1,4-alpha-linked oligosaccharide from growing alpha-1,4-glucan chains and the subsequent attachment of the oligosaccharide to the alpha-1,6 position. The polypeptide is 1,4-alpha-glucan branching enzyme GlgB (Nitratidesulfovibrio vulgaris (strain ATCC 29579 / DSM 644 / CCUG 34227 / NCIMB 8303 / VKM B-1760 / Hildenborough) (Desulfovibrio vulgaris)).